The following is a 517-amino-acid chain: Crotonobetaine/carnitine--CoA ligase (517 aa).

This sequence belongs to the ATP-dependent AMP-binding enzyme family.

It carries out the reaction 4-(trimethylamino)butanoate + ATP + CoA = 4-(trimethylamino)butanoyl-CoA + AMP + diphosphate. It catalyses the reaction crotonobetaine + ATP + CoA = crotonobetainyl-CoA + AMP + diphosphate. The enzyme catalyses (R)-carnitine + ATP + CoA = (R)-carnitinyl-CoA + AMP + diphosphate. Its pathway is amine and polyamine metabolism; carnitine metabolism. Its function is as follows. Catalyzes the transfer of CoA to carnitine, generating the initial carnitinyl-CoA needed for the CaiB reaction cycle. Also has activity toward crotonobetaine and gamma-butyrobetaine. This chain is Crotonobetaine/carnitine--CoA ligase, found in Escherichia coli O9:H4 (strain HS).